A 333-amino-acid chain; its full sequence is Fe(3+)-citrate import system permease protein YfmE (333 aa).

8 helical membrane passes run 12-32, 65-85, 95-115, 120-140, 194-214, 238-258, 279-299, and 306-326; these read LLAI…SIGI, IILA…LQGV, VVGI…IFPE, VLPF…LMIA, EVKL…ILIP, FILI…VGSI, YLLP…DTLG, and VEIP…LYLL.

The protein belongs to the binding-protein-dependent transport system permease family. FecCD subfamily. As to quaternary structure, the complex is composed of one ATP-binding protein (YfmF), two transmembrane proteins (YfmD and YfmE) and a solute-binding protein (YfmC).

It is found in the cell membrane. Its function is as follows. Part of the ABC transporter complex YfmCDEF involved in citrate-dependent Fe(3+) import. Involved in the translocation of the substrate across the membrane. The chain is Fe(3+)-citrate import system permease protein YfmE (yfmE) from Bacillus subtilis (strain 168).